A 350-amino-acid chain; its full sequence is fMet-Leu-Phe receptor (350 aa).

At 1-27 the chain is on the extracellular side; that stretch reads METNSSLPTNISGGTPAVSAGYLFLDI. N-linked (GlcNAc...) asparagine glycans are attached at residues N4 and N10. Residues 28–50 traverse the membrane as a helical segment; the sequence is ITYLVFAVTFVLGVLGNGLVIWV. The Cytoplasmic segment spans residues 51 to 61; the sequence is AGFRMTHTVTT. Residues 62–83 form a helical membrane-spanning segment; it reads ISYLNLAVADFCFTSTLPFFMV. At 84 to 100 the chain is on the extracellular side; sequence RKAMGGHWPFGWFLCKF. Cysteines 98 and 176 form a disulfide. A helical transmembrane segment spans residues 101-121; that stretch reads VFTIVDINLFGSVFLIALIAL. The Cytoplasmic segment spans residues 122-140; the sequence is DRCVCVLHPVWTQNHRTVS. A helical membrane pass occupies residues 141–162; it reads LAKKVIIGPWVMALLLTLPVII. Residues 163 to 205 lie on the Extracellular side of the membrane; sequence RVTTVPGKTGTVACTFNFSPWTNDPKERINVAVAMLTVRGIIR. Residues 206–226 form a helical membrane-spanning segment; the sequence is FIIGFSAPMSIVAVSYGLIAT. Residues 227–242 lie on the Cytoplasmic side of the membrane; the sequence is KIHKQGLIKSSRPLRV. A helical transmembrane segment spans residues 243-266; it reads LSFVAAAFFLCWSPYQVVALIATV. Residues 267–285 are Extracellular-facing; it reads RIRELLQGMYKEIGIAVDV. A helical membrane pass occupies residues 286-305; sequence TSALAFFNSCLNPMLYVFMG. The Cytoplasmic portion of the chain corresponds to 306 to 350; sequence QDFRERLIHALPASLERALTEDSTQTSDTATNSTLPSAEVELQAK. Residues 325–350 form a disordered region; it reads TEDSTQTSDTATNSTLPSAEVELQAK. The span at 326-341 shows a compositional bias: polar residues; sequence EDSTQTSDTATNSTLP. A Phosphoserine modification is found at S328. T329 and T331 each carry phosphothreonine. Residue S332 is modified to Phosphoserine. Phosphothreonine is present on residues T334 and T336. Position 338 is a phosphoserine (S338). T339 carries the post-translational modification Phosphothreonine.

It belongs to the G-protein coupled receptor 1 family. Interacts with S.aureus chemotaxis inhibitory protein (CHIPS); the interaction blocks the receptor and may thus inhibit the immune response. Phosphorylated; which is necessary for desensitization. Neutrophils.

The protein resides in the cell membrane. Its function is as follows. High affinity receptor for N-formyl-methionyl peptides (fMLP), which are powerful neutrophil chemotactic factors. Binding of fMLP to the receptor stimulates intracellular calcium mobilization and superoxide anion release. This response is mediated via a G-protein that activates a phosphatidylinositol-calcium second messenger system. Receptor for TAFA4, mediates its effects on chemoattracting macrophages, promoting phagocytosis and increasing ROS release. Receptor for cathepsin CTSG, leading to increased phagocyte chemotaxis. The chain is fMet-Leu-Phe receptor (FPR1) from Homo sapiens (Human).